The following is a 320-amino-acid chain: Aspartate carbamoyltransferase catalytic subunit (320 aa).

Carbamoyl phosphate-binding residues include arginine 68 and threonine 69. Lysine 96 contacts L-aspartate. 3 residues coordinate carbamoyl phosphate: arginine 118, histidine 148, and glutamine 151. 2 residues coordinate L-aspartate: arginine 181 and arginine 236. Glycine 277 and proline 278 together coordinate carbamoyl phosphate.

It belongs to the aspartate/ornithine carbamoyltransferase superfamily. ATCase family. In terms of assembly, heterododecamer (2C3:3R2) of six catalytic PyrB chains organized as two trimers (C3), and six regulatory PyrI chains organized as three dimers (R2).

It carries out the reaction carbamoyl phosphate + L-aspartate = N-carbamoyl-L-aspartate + phosphate + H(+). It participates in pyrimidine metabolism; UMP biosynthesis via de novo pathway; (S)-dihydroorotate from bicarbonate: step 2/3. In terms of biological role, catalyzes the condensation of carbamoyl phosphate and aspartate to form carbamoyl aspartate and inorganic phosphate, the committed step in the de novo pyrimidine nucleotide biosynthesis pathway. The protein is Aspartate carbamoyltransferase catalytic subunit of Polaromonas sp. (strain JS666 / ATCC BAA-500).